The following is a 651-amino-acid chain: Probable potassium transport system protein Kup (651 aa).

A run of 12 helical transmembrane segments spans residues 41 to 61 (LVLG…IYAF), 82 to 102 (VVSL…VLFV), 130 to 150 (LILG…VITP), 163 to 183 (IVAP…LVTL), 194 to 214 (VAIV…ASGL), 235 to 255 (FLTV…LAMT), 276 to 296 (WLWI…AFIL), 309 to 329 (MIPS…TVIA), 366 to 386 (IYIP…VLGF), 395 to 415 (AYGI…YIVM), 426 to 446 (ALPI…ANII), and 450 to 470 (EGGW…WTWV).

The protein belongs to the HAK/KUP transporter (TC 2.A.72) family.

The protein resides in the cell inner membrane. The enzyme catalyses K(+)(in) + H(+)(in) = K(+)(out) + H(+)(out). Functionally, transport of potassium into the cell. Likely operates as a K(+):H(+) symporter. The sequence is that of Probable potassium transport system protein Kup from Brucella canis (strain ATCC 23365 / NCTC 10854 / RM-666).